Reading from the N-terminus, the 351-residue chain is Homoserine O-acetyltransferase (351 aa).

Positions 51-334 (VIWVLHALTG…IYGHDAFLIE (284 aa)) constitute an AB hydrolase-1 domain. Ser-146 (nucleophile) is an active-site residue. Residue Arg-212 coordinates substrate. Active-site residues include Asp-299 and His-328. Asp-329 is a substrate binding site.

Belongs to the AB hydrolase superfamily. MetX family. Homodimer.

The protein localises to the cytoplasm. It catalyses the reaction L-homoserine + acetyl-CoA = O-acetyl-L-homoserine + CoA. It functions in the pathway amino-acid biosynthesis; L-methionine biosynthesis via de novo pathway; O-acetyl-L-homoserine from L-homoserine: step 1/1. Its function is as follows. Transfers an acetyl group from acetyl-CoA to L-homoserine, forming acetyl-L-homoserine. This chain is Homoserine O-acetyltransferase, found in Cyclobacterium marinum (strain ATCC 25205 / DSM 745 / LMG 13164 / NCIMB 1802) (Flectobacillus marinus).